The chain runs to 393 residues: Methylthioribose kinase (393 aa).

ATP-binding positions include asparagine 38, lysine 53, and 107-109 (EDL). A substrate-binding site is contributed by aspartate 225. 242 to 244 (DPE) is an ATP binding site. Arginine 332 is a substrate binding site.

It belongs to the methylthioribose kinase family. In terms of assembly, homodimer.

It carries out the reaction 5-(methylsulfanyl)-D-ribose + ATP = 5-(methylsulfanyl)-alpha-D-ribose 1-phosphate + ADP + H(+). Its pathway is amino-acid biosynthesis; L-methionine biosynthesis via salvage pathway; S-methyl-5-thio-alpha-D-ribose 1-phosphate from S-methyl-5'-thioadenosine (hydrolase route): step 2/2. Catalyzes the phosphorylation of methylthioribose into methylthioribose-1-phosphate. This chain is Methylthioribose kinase, found in Bacillus cereus (strain AH820).